The following is a 434-amino-acid chain: Trigger factor (434 aa).

In terms of domain architecture, PPIase FKBP-type spans 161–246; it reads EDRVTVDFTG…LKKVEQRELP (86 aa).

Belongs to the FKBP-type PPIase family. Tig subfamily.

Its subcellular location is the cytoplasm. It carries out the reaction [protein]-peptidylproline (omega=180) = [protein]-peptidylproline (omega=0). Functionally, involved in protein export. Acts as a chaperone by maintaining the newly synthesized protein in an open conformation. Functions as a peptidyl-prolyl cis-trans isomerase. This Sodalis glossinidius (strain morsitans) protein is Trigger factor.